Consider the following 422-residue polypeptide: Fasciclin-like arabinogalactan protein 10 (422 aa).

The first 25 residues, 1-25 (MATSRAFTLFAFTLSLLTVASTVSG), serve as a signal peptide directing secretion. 2 FAS1 domains span residues 26 to 172 (HNIT…NAPI) and 187 to 327 (GVSN…DNVL). N-linked (GlcNAc...) asparagine glycans are attached at residues asparagine 27, asparagine 128, asparagine 162, asparagine 190, and asparagine 244. The tract at residues 336–397 (SSSPAPAPEP…PTSSENSNAK (62 aa)) is disordered. Pro residues predominate over residues 340 to 374 (APAPEPVSAPTPTPAKSPSPVEAPSPTAASPPAPP). A compositionally biased stretch (polar residues) spans 386–397 (DSPTSSENSNAK). Residue asparagine 398 is the site of GPI-anchor amidated asparagine attachment. Residues 399–422 (AAFHVNAPALFTALVTIAATSLLL) constitute a propeptide, removed in mature form.

Belongs to the fasciclin-like AGP family.

Its subcellular location is the cell membrane. May be a cell surface adhesion protein. This is Fasciclin-like arabinogalactan protein 10 (FLA10) from Arabidopsis thaliana (Mouse-ear cress).